Here is an 83-residue protein sequence, read N- to C-terminus: Small ribosomal subunit protein bS21 (83 aa).

Residues 40–83 (TPMDERRRKARSASKRNKVKWRYSNKSEETASETAETPASAPEA) are disordered. Basic residues predominate over residues 47 to 62 (RKARSASKRNKVKWRY). Low complexity predominate over residues 71-83 (SETAETPASAPEA).

Belongs to the bacterial ribosomal protein bS21 family.

In Akkermansia muciniphila (strain ATCC BAA-835 / DSM 22959 / JCM 33894 / BCRC 81048 / CCUG 64013 / CIP 107961 / Muc), this protein is Small ribosomal subunit protein bS21.